The primary structure comprises 228 residues: uncharacterized protein (228 aa).

Residues 7-228 (VEVHHLKKSV…LVNGQLQEEA (222 aa)) enclose the ABC transporter domain. Position 43 to 50 (43 to 50 (GESGSGKS)) interacts with ATP.

This sequence belongs to the ABC transporter superfamily.

This is an uncharacterized protein from Escherichia coli O157:H7.